Here is a 242-residue protein sequence, read N- to C-terminus: Biosynthetic peptidoglycan transglycosylase (242 aa).

A helical membrane pass occupies residues 19-39 (LMVVLAVFWGGGIALFSVAPV).

The protein belongs to the glycosyltransferase 51 family.

The protein localises to the cell inner membrane. It catalyses the reaction [GlcNAc-(1-&gt;4)-Mur2Ac(oyl-L-Ala-gamma-D-Glu-L-Lys-D-Ala-D-Ala)](n)-di-trans,octa-cis-undecaprenyl diphosphate + beta-D-GlcNAc-(1-&gt;4)-Mur2Ac(oyl-L-Ala-gamma-D-Glu-L-Lys-D-Ala-D-Ala)-di-trans,octa-cis-undecaprenyl diphosphate = [GlcNAc-(1-&gt;4)-Mur2Ac(oyl-L-Ala-gamma-D-Glu-L-Lys-D-Ala-D-Ala)](n+1)-di-trans,octa-cis-undecaprenyl diphosphate + di-trans,octa-cis-undecaprenyl diphosphate + H(+). Its pathway is cell wall biogenesis; peptidoglycan biosynthesis. Peptidoglycan polymerase that catalyzes glycan chain elongation from lipid-linked precursors. This chain is Biosynthetic peptidoglycan transglycosylase, found in Escherichia coli O17:K52:H18 (strain UMN026 / ExPEC).